A 122-amino-acid chain; its full sequence is Large ribosomal subunit protein bL12 (122 aa).

It belongs to the bacterial ribosomal protein bL12 family. As to quaternary structure, homodimer. Part of the ribosomal stalk of the 50S ribosomal subunit. Forms a multimeric L10(L12)X complex, where L10 forms an elongated spine to which 2 to 4 L12 dimers bind in a sequential fashion. Binds GTP-bound translation factors.

Its function is as follows. Forms part of the ribosomal stalk which helps the ribosome interact with GTP-bound translation factors. Is thus essential for accurate translation. The polypeptide is Large ribosomal subunit protein bL12 (Lacticaseibacillus casei (strain BL23) (Lactobacillus casei)).